A 267-amino-acid polypeptide reads, in one-letter code: uncharacterized protein (267 aa).

The protein to S.pombe SpAC18G6.12c.

This is an uncharacterized protein from Schizosaccharomyces pombe (strain 972 / ATCC 24843) (Fission yeast).